We begin with the raw amino-acid sequence, 207 residues long: LexA repressor (207 aa).

The segment at residues 28–48 is a DNA-binding region (H-T-H motif); that stretch reads VREIGEAVGLASSSTVHGHLS. Residues Ser130 and Lys168 each act as for autocatalytic cleavage activity in the active site.

The protein belongs to the peptidase S24 family. Homodimer.

It catalyses the reaction Hydrolysis of Ala-|-Gly bond in repressor LexA.. Represses a number of genes involved in the response to DNA damage (SOS response), including recA and lexA. In the presence of single-stranded DNA, RecA interacts with LexA causing an autocatalytic cleavage which disrupts the DNA-binding part of LexA, leading to derepression of the SOS regulon and eventually DNA repair. This is LexA repressor from Staphylococcus haemolyticus (strain JCSC1435).